A 2559-amino-acid chain; its full sequence is Nonribosomal peptide synthetase asqK (2559 aa).

The segment at 90–474 is adenylation 1; the sequence is YRPSHTAIHA…SRKDSQVKIR (385 aa). One can recognise a Carrier 1 domain in the interval 593-669; sequence TNIEQLVHEL…SLVHYPAGLE (77 aa). S627 carries the O-(pantetheine 4'-phosphoryl)serine modification. The condensation 1 stretch occupies residues 695-989; it reads TVEQSFSQAR…GNVQCIRTKV (295 aa). An adenylation 2 region spans residues 1155–1562; it reads FDEQVRAQTD…GRMDQQVKVR (408 aa). Residues 1681-1776 are methyltransferase; the sequence is LEIGTGSGMI…NTIKDLVRQG (96 aa). In terms of domain architecture, Carrier 2 spans 2090–2164; sequence AFTSEIERAV…GLAQHLQGLG (75 aa). S2124 carries the post-translational modification O-(pantetheine 4'-phosphoryl)serine. Residues 2261–2409 form a condensation 2 region; the sequence is FDGVSLSAIL…VNRCLLRVKV (149 aa).

The protein belongs to the NRP synthetase family.

It catalyses the reaction O-methyl-L-tyrosine + anthranilate + S-adenosyl-L-methionine + 2 ATP = (-)-4'-methoxycyclopeptine + 2 AMP + S-adenosyl-L-homocysteine + 2 diphosphate + 2 H(+). The enzyme catalyses anthranilate + L-phenylalanine + S-adenosyl-L-methionine + 2 ATP = cyclopeptine + 2 AMP + S-adenosyl-L-homocysteine + 2 diphosphate + 2 H(+). It participates in secondary metabolite biosynthesis. The protein operates within alkaloid biosynthesis. It functions in the pathway mycotoxin biosynthesis. Nonribosomal peptide synthetase; part of the gene cluster that mediates the biosynthesis of the aspoquinolone mycotoxins. The first stage is catalyzed by the nonribosomal peptide synthetase asqK that condenses anthranilic acid and O-methyl-L-tyrosine to produce 4'-methoxycyclopeptin. AsqK is also able to use anthranilic acid and L-phenylalanine as substrates to produce cyclopeptin, but at a tenfold lower rate. Within the pathway, 4'-methoxycyclopeptin is then converted to 4'-methoxydehydrocyclopeptin by the ketoglutarate-dependent dioxygenase asqJ. AsqJ also converts its first product 4'-methoxydehydrocyclopeptin to 4'-methoxycyclopenin. The following conversion of 4'-methoxycyclopenin into 4'-methoxyviridicatin is catalyzed by the cyclopenase asqI. 4'-methoxyviridicatin is the precursor of quinolone natural products, and is further converted to quinolinone B. The prenyltransferase asqH1 then catalyzes the canonical Friedel-Crafts alkylation of quinolinone B with dimethylallyl cation to yield dimethylallyl quinolone, which is subjected to FAD-dependent dehydrogenation by the FAD-linked oxidoreductase asqF to yield conjugated aryl diene. The delta(3') double bond then serves as the site of the second alkylation with DMAPP catalyzed by the prenyltransferase asqH2 to yield a carbenium ion intermediate, which can be attacked by H(2)O to yield a styrenyl quinolone containing a C3'-hydroxyprenyl chain. The FAD-dependent monooxygenase asqG performs epoxidation of the terminal C7'-C8' olefin. Finally, after dehydratation of the epoxide at C3 by asqC, the quinolone epoxide rearrangement protein asqO catalyzes an enzymatic 3-exo-tet cyclization to yield the cyclopropyl-THF ring system in aspoquinolone. The chain is Nonribosomal peptide synthetase asqK from Emericella nidulans (strain FGSC A4 / ATCC 38163 / CBS 112.46 / NRRL 194 / M139) (Aspergillus nidulans).